The following is a 259-amino-acid chain: ATP synthase subunit a (259 aa).

Residues 1 to 10 (MFNLLNTYIT) constitute a propeptide, removed in mature form. Transmembrane regions (helical) follow at residues 36–56 (LTTF…LYTL), 92–112 (WGLY…ANLI), 125–145 (LVFI…LGLY), 150–170 (VFFS…LLVI), 191–211 (ILAG…FMLI), and 216–236 (LVFG…EFAI).

This sequence belongs to the ATPase A chain family. F-type ATPases have 2 components, CF(1) - the catalytic core - and CF(0) - the membrane proton channel. In yeast, the dimeric form of ATP synthase consists of 17 polypeptides: alpha, beta, gamma, delta, epsilon, 4 (B), 5 (OSCP), 6 (A), 8, 9 (C), d, E (Tim11), f, g, h, i/j and k.

The protein resides in the mitochondrion inner membrane. In terms of biological role, mitochondrial membrane ATP synthase (F(1)F(0) ATP synthase or Complex V) produces ATP from ADP in the presence of a proton gradient across the membrane which is generated by electron transport complexes of the respiratory chain. F-type ATPases consist of two structural domains, F(1) - containing the extramembraneous catalytic core and F(0) - containing the membrane proton channel, linked together by a central stalk and a peripheral stalk. During catalysis, ATP synthesis in the catalytic domain of F(1) is coupled via a rotary mechanism of the central stalk subunits to proton translocation. Key component of the proton channel; it may play a direct role in the translocation of protons across the membrane. The sequence is that of ATP synthase subunit a (ATP6) from Saccharomyces cerevisiae (strain ATCC 204508 / S288c) (Baker's yeast).